The chain runs to 378 residues: Cytochrome b (378 aa).

The next 4 helical transmembrane spans lie at 34 to 54 (FGSL…FLAM), 78 to 99 (WLLR…YLHV), 114 to 134 (WLIG…GYVL), and 179 to 199 (FFTF…IHLL). His84 and His98 together coordinate heme b. Residues His183 and His197 each coordinate heme b. His202 is an a ubiquinone binding site. The next 4 membrane-spanning stretches (helical) occupy residues 227-247 (FKDI…VLIS), 289-309 (LGGV…PFYN), 321-341 (INQV…WIGA), and 348-368 (YVLI…VNPL).

Belongs to the cytochrome b family. The main subunits of complex b-c1 are: cytochrome b, cytochrome c1 and the Rieske protein. Requires heme b as cofactor.

The protein localises to the mitochondrion inner membrane. Component of the ubiquinol-cytochrome c reductase complex (complex III or cytochrome b-c1 complex) that is part of the mitochondrial respiratory chain. The b-c1 complex mediates electron transfer from ubiquinol to cytochrome c. Contributes to the generation of a proton gradient across the mitochondrial membrane that is then used for ATP synthesis. This is Cytochrome b (mt:Cyt-b) from Drosophila melanogaster (Fruit fly).